We begin with the raw amino-acid sequence, 463 residues long: Perilipin-5 (463 aa).

The interaction with LIPE stretch occupies residues 1–108 (MSEEEAAQIP…KLEEKLPFLQ (108 aa)). The tract at residues 1–173 (MSEEEAAQIP…HFLPMTEEEL (173 aa)) is essential for lipid droplet targeting. 3 positions are modified to phosphoserine: serine 2, serine 148, and serine 322. An interaction with PNPLA2 and ABHD5 region spans residues 185-463 (VGSVEDQRRQ…KHTLMPELDF (279 aa)). A recruits mitochondria at the lipid droplet surface region spans residues 444–463 (QEPETPSCPVKHTLMPELDF).

It belongs to the perilipin family. Homooligomer. Interacts with PNPLA2; prevents interaction of PNPLA2 with ABHD5. Interacts with ABHD5; targets ABHD5 to lipid droplets and promotes interaction of ABHD5 with PNPLA2. Interacts with LIPE. In terms of processing, phosphorylated by PKA. Phosphorylated on serine in skeletal muscle at rest or upon lipolytic stimulation. Expressed in skeletal muscle, liver, heart and kidney.

It is found in the lipid droplet. It localises to the cytoplasm. The protein resides in the mitochondrion. Functionally, lipid droplet-associated protein that maintains the balance between lipogenesis and lipolysis and also regulates fatty acid oxidation in oxidative tissues. Recruits mitochondria to the surface of lipid droplets and is involved in lipid droplet homeostasis by regulating both the storage of fatty acids in the form of triglycerides and the release of fatty acids for mitochondrial fatty acid oxidation. In lipid droplet triacylglycerol hydrolysis, plays a role as a scaffolding protein for three major key lipolytic players: ABHD5, PNPLA2 and LIPE. Reduces the triacylglycerol hydrolase activity of PNPLA2 by recruiting and sequestering PNPLA2 to lipid droplets. Phosphorylation by PKA enables lipolysis probably by promoting release of ABHD5 from the perilipin scaffold and by facilitating interaction of ABHD5 with PNPLA2. Also increases lipolysis through interaction with LIPE and upon PKA-mediated phosphorylation of LIPE. The polypeptide is Perilipin-5 (PLIN5) (Homo sapiens (Human)).